Reading from the N-terminus, the 428-residue chain is Enolase 3 (428 aa).

Residue Gln163 participates in (2R)-2-phosphoglycerate binding. Catalysis depends on Glu205, which acts as the Proton donor. Mg(2+) contacts are provided by Asp242, Glu286, and Asp313. Residues Lys338, Arg367, Ser368, and Lys389 each contribute to the (2R)-2-phosphoglycerate site. Lys338 (proton acceptor) is an active-site residue.

It belongs to the enolase family. It depends on Mg(2+) as a cofactor.

The protein resides in the cytoplasm. It is found in the secreted. It localises to the cell surface. The enzyme catalyses (2R)-2-phosphoglycerate = phosphoenolpyruvate + H2O. Its pathway is carbohydrate degradation; glycolysis; pyruvate from D-glyceraldehyde 3-phosphate: step 4/5. In terms of biological role, catalyzes the reversible conversion of 2-phosphoglycerate (2-PG) into phosphoenolpyruvate (PEP). It is essential for the degradation of carbohydrates via glycolysis. The polypeptide is Enolase 3 (Lactobacillus johnsonii (strain CNCM I-12250 / La1 / NCC 533)).